A 226-amino-acid polypeptide reads, in one-letter code: Leucyl/phenylalanyl-tRNA--protein transferase (226 aa).

The protein belongs to the L/F-transferase family.

It is found in the cytoplasm. It catalyses the reaction N-terminal L-lysyl-[protein] + L-leucyl-tRNA(Leu) = N-terminal L-leucyl-L-lysyl-[protein] + tRNA(Leu) + H(+). It carries out the reaction N-terminal L-arginyl-[protein] + L-leucyl-tRNA(Leu) = N-terminal L-leucyl-L-arginyl-[protein] + tRNA(Leu) + H(+). The enzyme catalyses L-phenylalanyl-tRNA(Phe) + an N-terminal L-alpha-aminoacyl-[protein] = an N-terminal L-phenylalanyl-L-alpha-aminoacyl-[protein] + tRNA(Phe). Functions in the N-end rule pathway of protein degradation where it conjugates Leu, Phe and, less efficiently, Met from aminoacyl-tRNAs to the N-termini of proteins containing an N-terminal arginine or lysine. This Pseudomonas aeruginosa (strain ATCC 15692 / DSM 22644 / CIP 104116 / JCM 14847 / LMG 12228 / 1C / PRS 101 / PAO1) protein is Leucyl/phenylalanyl-tRNA--protein transferase.